The following is a 397-amino-acid chain: Probable peptidoglycan glycosyltransferase FtsW (397 aa).

Over 1–18 (MSALTLTASKNTQTMTLD) the chain is Cytoplasmic. A helical membrane pass occupies residues 19–39 (LPLLGSALALAAIGLIMVTSA). Topologically, residues 40–58 (SVDFADDANGQALYYMWRH) are periplasmic. A helical membrane pass occupies residues 59–79 (LTYLLAGVAVGFVILRLPLEW). At 80 to 83 (WHKQ) the chain is on the cytoplasmic side. The chain crosses the membrane as a helical span at residues 84–104 (SWLLLVVALGFLVAVLIPGIG). Over 105–112 (RTVNGSTR) the chain is Periplasmic. A helical transmembrane segment spans residues 113–133 (WISLGVINIQASEIAKVCLAI). Residues 134-148 (YTASYLVRRLDEVRG) lie on the Cytoplasmic side of the membrane. Residues 149-169 (SWWGFAKPLLVLMLVALLLLM) form a helical membrane-spanning segment. Topologically, residues 170-172 (EPD) are periplasmic. A helical membrane pass occupies residues 173–193 (FGALVVTMCAVVGMIFLSGVA). The Cytoplasmic portion of the chain corresponds to 194-196 (LSR). The chain crosses the membrane as a helical span at residues 197-217 (FAALLMFCVGSVALLAVSQPY). The Periplasmic segment spans residues 218–272 (RLKRLTAYTDPWADQFDSGYQLTQALIAFGRGEWSGVGLGNSVQKLFYLPEAHTD). Residues 273–293 (FVFAIIAEELGLLGSLLIIVL) form a helical membrane-spanning segment. Over 294–316 (FGVLLWRGMYVSRVAERAGQLFN) the chain is Cytoplasmic. Residues 317 to 337 (AYAGYGVTLLLGGQALINLGV) traverse the membrane as a helical segment. At 338–348 (NTGLLPTKGLT) the chain is on the periplasmic side. Residues 349–369 (LPLISYGGSSLIISCLCVAIL) traverse the membrane as a helical segment. Residues 370-397 (LRIGSEAVSGEQTEDESPKVKNRGGAQR) lie on the Cytoplasmic side of the membrane.

This sequence belongs to the SEDS family. FtsW subfamily.

The protein resides in the cell inner membrane. The catalysed reaction is [GlcNAc-(1-&gt;4)-Mur2Ac(oyl-L-Ala-gamma-D-Glu-L-Lys-D-Ala-D-Ala)](n)-di-trans,octa-cis-undecaprenyl diphosphate + beta-D-GlcNAc-(1-&gt;4)-Mur2Ac(oyl-L-Ala-gamma-D-Glu-L-Lys-D-Ala-D-Ala)-di-trans,octa-cis-undecaprenyl diphosphate = [GlcNAc-(1-&gt;4)-Mur2Ac(oyl-L-Ala-gamma-D-Glu-L-Lys-D-Ala-D-Ala)](n+1)-di-trans,octa-cis-undecaprenyl diphosphate + di-trans,octa-cis-undecaprenyl diphosphate + H(+). It functions in the pathway cell wall biogenesis; peptidoglycan biosynthesis. Its function is as follows. Peptidoglycan polymerase that is essential for cell division. The polypeptide is Probable peptidoglycan glycosyltransferase FtsW (Hahella chejuensis (strain KCTC 2396)).